The sequence spans 102 residues: NAD(P)H-quinone oxidoreductase subunit 4L (102 aa).

A run of 3 helical transmembrane segments spans residues leucine 4 to valine 24, methionine 33 to valine 53, and valine 65 to isoleucine 85.

Belongs to the complex I subunit 4L family. In terms of assembly, NDH-1 can be composed of about 15 different subunits; different subcomplexes with different compositions have been identified which probably have different functions.

The protein localises to the cellular thylakoid membrane. The catalysed reaction is a plastoquinone + NADH + (n+1) H(+)(in) = a plastoquinol + NAD(+) + n H(+)(out). It catalyses the reaction a plastoquinone + NADPH + (n+1) H(+)(in) = a plastoquinol + NADP(+) + n H(+)(out). Functionally, NDH-1 shuttles electrons from an unknown electron donor, via FMN and iron-sulfur (Fe-S) centers, to quinones in the respiratory and/or the photosynthetic chain. The immediate electron acceptor for the enzyme in this species is believed to be plastoquinone. Couples the redox reaction to proton translocation, and thus conserves the redox energy in a proton gradient. Cyanobacterial NDH-1 also plays a role in inorganic carbon-concentration. The polypeptide is NAD(P)H-quinone oxidoreductase subunit 4L (Synechococcus sp. (strain JA-3-3Ab) (Cyanobacteria bacterium Yellowstone A-Prime)).